Reading from the N-terminus, the 247-residue chain is Carboxy-S-adenosyl-L-methionine synthase (247 aa).

Residues Tyr39, 64-66 (GCS), 89-90 (DN), 117-118 (DI), Asn132, and Arg199 contribute to the S-adenosyl-L-methionine site.

Belongs to the class I-like SAM-binding methyltransferase superfamily. Cx-SAM synthase family. Homodimer.

It catalyses the reaction prephenate + S-adenosyl-L-methionine = carboxy-S-adenosyl-L-methionine + 3-phenylpyruvate + H2O. Catalyzes the conversion of S-adenosyl-L-methionine (SAM) to carboxy-S-adenosyl-L-methionine (Cx-SAM). The sequence is that of Carboxy-S-adenosyl-L-methionine synthase from Escherichia coli (strain K12 / MC4100 / BW2952).